The primary structure comprises 325 residues: DNA-directed RNA polymerase subunit alpha (325 aa).

Residues 1-239 (MQQFLRYNIN…DHLKPLIDIN (239 aa)) are alpha N-terminal domain (alpha-NTD). The interval 255–325 (EKNKKLSIPI…ELYDLKLKNN (71 aa)) is alpha C-terminal domain (alpha-CTD).

This sequence belongs to the RNA polymerase alpha chain family. In terms of assembly, homodimer. The RNAP catalytic core consists of 2 alpha, 1 beta, 1 beta' and 1 omega subunit. When a sigma factor is associated with the core the holoenzyme is formed, which can initiate transcription.

It catalyses the reaction RNA(n) + a ribonucleoside 5'-triphosphate = RNA(n+1) + diphosphate. In terms of biological role, DNA-dependent RNA polymerase catalyzes the transcription of DNA into RNA using the four ribonucleoside triphosphates as substrates. The sequence is that of DNA-directed RNA polymerase subunit alpha from Mycoplasmoides gallisepticum (strain R(low / passage 15 / clone 2)) (Mycoplasma gallisepticum).